Reading from the N-terminus, the 478-residue chain is Major facilitator superfamily domain-containing protein 12 (478 aa).

Met-1 carries the N-acetylmethionine modification. Residues 1–26 lie on the Cytoplasmic side of the membrane; that stretch reads MVPGSPAAGAGPAPRALSLAARLSYA. The chain crosses the membrane as a helical span at residues 27–47; sequence VGHFLNDLCASMWFTYLLLYL. The Lumenal segment spans residues 48–56; sequence HSVRAYSSR. Residues 57–77 traverse the membrane as a helical segment; the sequence is GAGLLLLLGQVADGLCTPLVG. Residues 78 to 97 lie on the Cytoplasmic side of the membrane; sequence YEADRAAGRCARCGPRKAWH. A helical membrane pass occupies residues 98–118; it reads LVGTVCVLLSFPFIFSPCLGC. At 119 to 124 the chain is on the lumenal side; that stretch reads GAATPE. A helical membrane pass occupies residues 125–145; it reads WAALLYYGPFIVVFQFGWAAT. The Cytoplasmic portion of the chain corresponds to 146–168; it reads QIAHLSLIPELVTSDHEKVELTA. A helical transmembrane segment spans residues 169–189; that stretch reads LRYAFTVVANITVFGAAWLLL. At 190 to 216 the chain is on the lumenal side; the sequence is RLQGSAREGPPDEAGDHLGVQDVPVFR. A helical membrane pass occupies residues 217 to 237; it reads TLSLCVVGVGAVFSLLFHLGT. The Cytoplasmic portion of the chain corresponds to 238 to 277; that stretch reads RERRRPPAQEPDERSPLLAPATARPLLLWKHWLREPSFYQ. Residues 278–300 traverse the membrane as a helical segment; sequence VGLLYMSTRLIVNLSQTYIAMYL. The Lumenal segment spans residues 301 to 308; the sequence is TYSLNLPK. A helical transmembrane segment spans residues 309-329; sequence KFIATIPLVMYVSGFCSSFLM. The Cytoplasmic portion of the chain corresponds to 330 to 338; that stretch reads KPVNKCIGR. A helical membrane pass occupies residues 339 to 359; the sequence is NMTYFVGLLVILAFAAWVVLV. At 360-361 the chain is on the lumenal side; it reads DE. The chain crosses the membrane as a helical span at residues 362–382; that stretch reads LGMAVYVAAVLLGGGCATILV. Residues 383–400 are Cytoplasmic-facing; that stretch reads TSLAMTADLIGPHTHSGA. The helical transmembrane segment at 401–421 threads the bilayer; the sequence is FVYGAMSFSDKVANGLAVMVI. At 422–436 the chain is on the lumenal side; that stretch reads QSLHPCSLELCCRAC. Residues 437–457 form a helical membrane-spanning segment; it reads VGFYHWVMVAVTGGVGVAATL. At 458–478 the chain is on the cytoplasmic side; that stretch reads SLCSLLVWPIRLRSWDPGAQP.

Belongs to the major facilitator superfamily.

The protein localises to the melanosome membrane. It localises to the lysosome membrane. The catalysed reaction is L-cysteine(in) = L-cysteine(out). Transporter that mediates the import of cysteine into melanosomes, thereby regulating skin/hair pigmentation. In melanosomes, cysteine import is required both for normal levels of cystine, the oxidized dimer of cysteine, and provide cysteine for the production of the cysteinyldopas used in pheomelanin synthesis, thereby regulating skin/hair pigmentation. Also catalyzes import of cysteine into lysosomes in non-pigmented cells, regulating lysosomal cystine and cysteine storage, which is essnetial for redox homeostasis. The chain is Major facilitator superfamily domain-containing protein 12 from Equus caballus (Horse).